The chain runs to 1037 residues: Signal-induced proliferation-associated protein 1 (1037 aa).

The interval 1–85 (MWAGGVGSPR…ASRPAATPTR (85 aa)) is disordered. Threonine 62 bears the Phosphothreonine mark. Residues serine 65, serine 178, serine 299, and serine 309 each carry the phosphoserine modification. The Rap-GAP domain occupies 316 to 534 (LLTLDEQVLS…RTRQQYLQDL (219 aa)). Positions 682–758 (ELALPRDGQG…VCVTVLPPDE (77 aa)) constitute a PDZ domain. 2 positions are modified to phosphoserine: serine 812 and serine 834. 2 disordered regions span residues 830-849 (HNSLSSGSSLSDEAPVLPNT) and 855-898 (LVTT…ASIL). A compositionally biased stretch (low complexity) spans 871–881 (PPSQDQSGSPS). The residue at position 907 (serine 907) is a Phosphoserine. A disordered region spans residues 943-969 (REGQPISESGDPKEALKCDSEPEPGSL). A compositionally biased stretch (basic and acidic residues) spans 952-962 (GDPKEALKCDS). Residues 968–1025 (SLSEKVSHLESMLWKLQEDLQREKADRAALEEEVRSLRHNNQRLLAESESAATRLLLA) are a coiled coil.

Interacts with RRP1B; the interaction leads to inhibition of SIPA1 GTPase activity. As to expression, preferentially expressed in both fetal and adult lymphohematopoietic tissues.

It localises to the nucleus. The protein resides in the cytoplasm. Its subcellular location is the perinuclear region. The protein localises to the endomembrane system. In terms of biological role, GTPase activator for the nuclear Ras-related regulatory proteins Rap1, Rsr1 and Ran in vitro, converting them to the putatively inactive GDP-bound state. Affects cell cycle progression. This is Signal-induced proliferation-associated protein 1 (Sipa1) from Mus musculus (Mouse).